Consider the following 189-residue polypeptide: 3-hydroxyanthranilate 3,4-dioxygenase (189 aa).

Position 50 (R50) interacts with O2. Fe cation contacts are provided by H54, E60, and H102. E60 is a binding site for substrate. Substrate-binding residues include R106 and E116. Positions 131, 136, 170, and 173 each coordinate a divalent metal cation.

It belongs to the 3-HAO family. The cofactor is Fe(2+).

It localises to the cytoplasm. The catalysed reaction is 3-hydroxyanthranilate + O2 = (2Z,4Z)-2-amino-3-carboxymuconate 6-semialdehyde. It participates in cofactor biosynthesis; NAD(+) biosynthesis; quinolinate from L-kynurenine: step 3/3. In terms of biological role, catalyzes the oxidative ring opening of 3-hydroxyanthranilate to 2-amino-3-carboxymuconate semialdehyde, which spontaneously cyclizes to quinolinate. In Aspergillus niger (strain ATCC MYA-4892 / CBS 513.88 / FGSC A1513), this protein is 3-hydroxyanthranilate 3,4-dioxygenase (bna1).